A 228-amino-acid chain; its full sequence is Small ribosomal subunit protein uS10m (228 aa).

The transit peptide at 1-17 (MKRYMFGTLPRVQPKRC) directs the protein to the mitochondrion.

It belongs to the universal ribosomal protein uS10 family. In terms of assembly, component of the mitochondrial small ribosomal subunit (mt-SSU). Mature yeast 74S mitochondrial ribosomes consist of a small (37S) and a large (54S) subunit. The 37S small subunit contains a 15S ribosomal RNA (15S mt-rRNA) and at least 32 different proteins. The 54S large subunit contains a 21S rRNA (21S mt-rRNA) and at least 45 different proteins.

The protein resides in the mitochondrion. In terms of biological role, component of the mitochondrial ribosome (mitoribosome), a dedicated translation machinery responsible for the synthesis of mitochondrial genome-encoded proteins, including at least some of the essential transmembrane subunits of the mitochondrial respiratory chain. The mitoribosomes are attached to the mitochondrial inner membrane and translation products are cotranslationally integrated into the membrane. This is Small ribosomal subunit protein uS10m (rsm10) from Schizosaccharomyces pombe (strain 972 / ATCC 24843) (Fission yeast).